Consider the following 248-residue polypeptide: Adenosylcobinamide-GDP ribazoletransferase (248 aa).

The next 5 helical transmembrane spans lie at 30-50 (LAESFSFFPLVGLILGFCYAL), 54-74 (VLSGVVPSLLLAVAITALTAV), 112-132 (FGALAIALAVAFKVAALDAVI), 134-154 (AGSFLPLLLVPVVSRLAMVLA), and 188-208 (AVSAFLVQPVFGLCALVLAAG).

The protein belongs to the CobS family. It depends on Mg(2+) as a cofactor.

Its subcellular location is the cell inner membrane. The catalysed reaction is alpha-ribazole + adenosylcob(III)inamide-GDP = adenosylcob(III)alamin + GMP + H(+). The enzyme catalyses alpha-ribazole 5'-phosphate + adenosylcob(III)inamide-GDP = adenosylcob(III)alamin 5'-phosphate + GMP + H(+). It participates in cofactor biosynthesis; adenosylcobalamin biosynthesis; adenosylcobalamin from cob(II)yrinate a,c-diamide: step 7/7. Functionally, joins adenosylcobinamide-GDP and alpha-ribazole to generate adenosylcobalamin (Ado-cobalamin). Also synthesizes adenosylcobalamin 5'-phosphate from adenosylcobinamide-GDP and alpha-ribazole 5'-phosphate. This Syntrophobacter fumaroxidans (strain DSM 10017 / MPOB) protein is Adenosylcobinamide-GDP ribazoletransferase.